Here is a 488-residue protein sequence, read N- to C-terminus: MSKPIIFLLTAFVVLTDLGATEDTEKVEVKAKPSKTSRGAIGQGFELHKIDLLSKELQGTGAQVFEELPVEECTTDNKLGTIQKDDTFYSNTESLYNSVASNSKIEPSLKGPFTLGTSVGAVTNNIVSEKSEIQGLSLNLKAYSMIHALKQDCINKKPLAKDLVSDFEALDREVKKPWLKPSWRKYKVFLEKFGTHIVRETMSGSSIYQYVFAKSSESFKQRDFKIKACLSLGGPTQVGKLGISACSDVSKKDVEESSGKEMVKKLVVRGGKSDTRVDLTGELSKNQINKFLKEATTDPSPIQYTFYPVWTILKARYIGKEHYAKATNLEQFYKGYLNFDCAYEKSEKGLELQKFELAEDSDPDAPTYVCKLGPEGCHSDDDCESDDLIYCACCGDSCIRYNNTVLLSTGDTKKVAFINDVDDEFRDHGCGRKGLKCKCKEENKKWGQSWSGDSDADAALRDINAMMLDQNRRDQAKRHHVKKGKSLH.

The first 21 residues, 1-21 (MSKPIIFLLTAFVVLTDLGAT), serve as a signal peptide directing secretion. Residues 24–344 (TEKVEVKAKP…GYLNFDCAYE (321 aa)) enclose the MACPF domain. Residues 369 to 398 (VCKLGPEGCHSDDDCESDDLIYCACCGDSC) enclose the EGF-like domain. 3 disulfides stabilise this stretch: Cys-370–Cys-383, Cys-377–Cys-391, and Cys-393–Cys-398.

It localises to the secreted. It is found in the nematocyst. Causes lethal toxicity to the shrimp Palaemon paucidence, and hemolytic activity toward sheep red blood cells. This Phyllodiscus semoni (Night anemone) protein is DELTA-alicitoxin-Pse2b.